Reading from the N-terminus, the 389-residue chain is Mitochondrial carrier homolog 1 (389 aa).

Positions 1 to 78 (MGASDPEVAP…PGAPGSGDNA (78 aa)) are disordered. The Mitochondrial intermembrane portion of the chain corresponds to 1 to 93 (MGASDPEVAP…LFVALGAGVT (93 aa)). Over residues 15–33 (GAAGMAGAGAGAGARGGAP) the composition is skewed to gly residues. Arg-29 is modified (omega-N-methylarginine). Solcar repeat units follow at residues 81 to 176 (TEAL…FPPD) and 192 to 280 (KKVV…INAY). The chain crosses the membrane as a helical span at residues 94 to 104 (ALSHPLLYVKL). Topologically, residues 105–155 (LIQVGHEPMPPTLGTNVLGRKVLYLPSFFTYAKYIVQVDGKIGLFRGLSPR) are cytoplasmic. The helical transmembrane segment at 156-176 (LMSNALSTVTRGSMKKVFPPD) threads the bilayer. Residues 177-209 (EMEQVSNKDDMKTSLKKVVKETSYEMMMQCVSR) lie on the Mitochondrial intermembrane side of the membrane. Residues 210–229 (MLAHPLHVISMRCMVQFVGR) traverse the membrane as a helical segment. Residues 230 to 254 (EAKYSGVLSSIGKIFKEEGLLGFFV) lie on the Cytoplasmic side of the membrane. The chain crosses the membrane as a helical span at residues 255-279 (GLIPHLLGDVVFLWGCNLLAHFINA). Residues 280-322 (YLVDDSVSDTPGGLGNDQNPGSQFSQALAIRSYTKFVMGIAVS) are Mitochondrial intermembrane-facing. Residues 323-342 (MLTYPFLLVGDLMAVNNCGL) traverse the membrane as a helical segment. Topologically, residues 343–371 (RAGLPPYSPVFKSWIHCWKYLSVQGQLFR) are cytoplasmic. A helical transmembrane segment spans residues 372-389 (GSSLLFRRVSSGSCFALE).

It belongs to the mitochondrial carrier (TC 2.A.29) family. As to quaternary structure, interacts with PSEN1.

It is found in the mitochondrion outer membrane. In terms of biological role, protein insertase that mediates insertion of transmembrane proteins into the mitochondrial outer membrane. Catalyzes insertion of proteins with alpha-helical transmembrane regions, such as signal-anchored, tail-anchored and multi-pass membrane proteins. Does not mediate insertion of beta-barrel transmembrane proteins. May play a role in apoptosis. In Mus musculus (Mouse), this protein is Mitochondrial carrier homolog 1 (Mtch1).